A 952-amino-acid polypeptide reads, in one-letter code: UPF0182 protein SRU_2225 (952 aa).

Transmembrane regions (helical) follow at residues Ile12–Val32, Ala52–Phe72, Leu109–Trp129, Ala168–Gly188, Leu207–Tyr227, Val247–Gly267, and Leu277–Pro297. Residues Val917 to Ser952 are disordered. A compositionally biased stretch (polar residues) spans Ser931 to Ala940.

It belongs to the UPF0182 family.

The protein resides in the cell membrane. The sequence is that of UPF0182 protein SRU_2225 from Salinibacter ruber (strain DSM 13855 / M31).